Here is a 469-residue protein sequence, read N- to C-terminus: 3-phosphoshikimate 1-carboxyvinyltransferase (469 aa).

The disordered stretch occupies residues 21–45 (KDTILTHSDQPRPLQSRANGPLTGK). 3-phosphoshikimate-binding residues include K52, S53, and R57. K52 serves as a coordination point for phosphoenolpyruvate. Residues G125 and R153 each coordinate phosphoenolpyruvate. 3-phosphoshikimate contacts are provided by S199, Q201, D352, and K379. Q201 is a phosphoenolpyruvate binding site. The Proton acceptor role is filled by D352. Residues R383 and R426 each contribute to the phosphoenolpyruvate site.

The protein belongs to the EPSP synthase family. In terms of assembly, monomer.

The protein resides in the cytoplasm. The catalysed reaction is 3-phosphoshikimate + phosphoenolpyruvate = 5-O-(1-carboxyvinyl)-3-phosphoshikimate + phosphate. The protein operates within metabolic intermediate biosynthesis; chorismate biosynthesis; chorismate from D-erythrose 4-phosphate and phosphoenolpyruvate: step 6/7. Functionally, catalyzes the transfer of the enolpyruvyl moiety of phosphoenolpyruvate (PEP) to the 5-hydroxyl of shikimate-3-phosphate (S3P) to produce enolpyruvyl shikimate-3-phosphate and inorganic phosphate. The polypeptide is 3-phosphoshikimate 1-carboxyvinyltransferase (Bradyrhizobium diazoefficiens (strain JCM 10833 / BCRC 13528 / IAM 13628 / NBRC 14792 / USDA 110)).